Consider the following 356-residue polypeptide: Fructose-1,6-bisphosphatase class 1 (356 aa).

The disordered stretch occupies residues 1-26 (MAREWPMTHPSNHPMDHHHQTLQAHL). Positions 101, 120, 122, and 123 each coordinate Mg(2+). Substrate-binding positions include 123–126 (DGSS) and N211. Position 283 (E283) interacts with Mg(2+).

It belongs to the FBPase class 1 family. Homotetramer. Mg(2+) serves as cofactor.

It is found in the cytoplasm. It catalyses the reaction beta-D-fructose 1,6-bisphosphate + H2O = beta-D-fructose 6-phosphate + phosphate. It participates in carbohydrate biosynthesis; Calvin cycle. In Bradyrhizobium sp. (strain ORS 278), this protein is Fructose-1,6-bisphosphatase class 1.